The primary structure comprises 225 residues: tRNA 2'-phosphotransferase 1 (225 aa).

The interval 1 to 21 (MDCETRGRGRRGRGNRNEESR) is disordered.

Belongs to the KptA/TPT1 family.

The enzyme catalyses 2'-phospho-[ligated tRNA] + NAD(+) = mature tRNA + ADP-alpha-D-ribose 1'',2''-cyclic phosphate + nicotinamide. In terms of biological role, catalyzes the last step of tRNA splicing, the transfer of the splice junction 2'-phosphate from ligated tRNA to NAD to produce ADP-ribose 1''-2'' cyclic phosphate. The chain is tRNA 2'-phosphotransferase 1 (trpt1) from Danio rerio (Zebrafish).